Consider the following 969-residue polypeptide: Isoleucine--tRNA ligase (969 aa).

Residues proline 68 to histidine 78 carry the 'HIGH' region motif. Glutamate 585 contacts L-isoleucyl-5'-AMP. The short motif at lysine 626–serine 630 is the 'KMSKS' region element. ATP is bound at residue lysine 629. The Zn(2+) site is built by cysteine 939, cysteine 942, cysteine 959, and cysteine 962.

It belongs to the class-I aminoacyl-tRNA synthetase family. IleS type 1 subfamily. In terms of assembly, monomer. It depends on Zn(2+) as a cofactor.

Its subcellular location is the cytoplasm. The enzyme catalyses tRNA(Ile) + L-isoleucine + ATP = L-isoleucyl-tRNA(Ile) + AMP + diphosphate. Catalyzes the attachment of isoleucine to tRNA(Ile). As IleRS can inadvertently accommodate and process structurally similar amino acids such as valine, to avoid such errors it has two additional distinct tRNA(Ile)-dependent editing activities. One activity is designated as 'pretransfer' editing and involves the hydrolysis of activated Val-AMP. The other activity is designated 'posttransfer' editing and involves deacylation of mischarged Val-tRNA(Ile). The chain is Isoleucine--tRNA ligase from Prochlorococcus marinus (strain MIT 9211).